The primary structure comprises 88 residues: Small ribosomal subunit protein uS17 (88 aa).

This sequence belongs to the universal ribosomal protein uS17 family. Part of the 30S ribosomal subunit.

Functionally, one of the primary rRNA binding proteins, it binds specifically to the 5'-end of 16S ribosomal RNA. This chain is Small ribosomal subunit protein uS17, found in Stutzerimonas stutzeri (strain A1501) (Pseudomonas stutzeri).